We begin with the raw amino-acid sequence, 625 residues long: Dopamine beta-hydroxylase (625 aa).

Over 1–9 (MQVPSPSAR) the chain is Cytoplasmic. Residues 10 to 30 (EAASMYGTAVAVFLVLLVAVL) traverse the membrane as a helical; Signal-anchor for type II membrane protein segment. At 31 to 625 (QGLAPPESPL…TVVNIGGGKV (595 aa)) the chain is on the intragranular side. Residues 50-166 (GDLELSWDVS…GTVHLVYGVL (117 aa)) form the DOMON domain. 6 disulfide bridges follow: C147-C604, C224-C275, C261-C287, C382-C495, C386-C573, and C458-C480. N177 is a glycosylation site (N-linked (GlcNAc...) asparagine). Y222 is a catalytic residue. Cu(2+) is bound by residues H254 and H255. N-linked (GlcNAc...) asparagine glycosylation is present at N315. Positions 325, 404, 406, and 479 each coordinate Cu(2+). The active site involves H404. A glycan (N-linked (GlcNAc...) asparagine) is linked at N574.

The protein belongs to the copper type II ascorbate-dependent monooxygenase family. As to quaternary structure, homotetramer; composed of two disulfide-linked dimers. Requires Cu(2+) as cofactor. In terms of processing, proteolytic cleavage after the membrane-anchor leads to the release of the soluble form. N-glycosylated.

The protein localises to the cytoplasmic vesicle. It is found in the secretory vesicle lumen. Its subcellular location is the secretory vesicle. The protein resides in the chromaffin granule lumen. It localises to the secreted. The protein localises to the secretory vesicle membrane. It is found in the chromaffin granule membrane. The enzyme catalyses dopamine + 2 L-ascorbate + O2 = (R)-noradrenaline + 2 monodehydro-L-ascorbate radical + H2O. The protein operates within catecholamine biosynthesis; (R)-noradrenaline biosynthesis; (R)-noradrenaline from dopamine: step 1/1. In terms of biological role, catalyzes the hydroxylation of dopamine to noradrenaline (also known as norepinephrine), and is thus vital for regulation of these neurotransmitters. The sequence is that of Dopamine beta-hydroxylase (DBH) from Canis lupus familiaris (Dog).